Reading from the N-terminus, the 376-residue chain is Carbohydrate sulfotransferase 14 (376 aa).

A disordered region spans residues 1–30 (MFPRPLTPLAAPKSAETLGRTPRRAPLGRA). Residues 1-39 (MFPRPLTPLAAPKSAETLGRTPRRAPLGRARAGLGGPPL) lie on the Cytoplasmic side of the membrane. Positions 18–30 (LGRTPRRAPLGRA) are enriched in low complexity. A helical; Signal-anchor for type II membrane protein membrane pass occupies residues 40–60 (LLPSMLMFAVIVASSGLLLMI). Over 61–376 (ERGILSEMKP…PNVTKEACHQ (316 aa)) the chain is Lumenal. A disordered region spans residues 76–96 (PSHKGAAWSGTDPKPRGLSLD). N-linked (GlcNAc...) asparagine glycosylation occurs at Asn110. Residues 155–161 (PKVACSN) and 213–221 (RDPLERLLS) each bind 3'-phosphoadenylyl sulfate. Asn368 carries N-linked (GlcNAc...) asparagine glycosylation.

The protein belongs to the sulfotransferase 2 family.

It localises to the golgi apparatus membrane. The enzyme catalyses dermatan + n 3'-phosphoadenylyl sulfate = dermatan 4'-sulfate + n adenosine 3',5'-bisphosphate + n H(+). Functionally, catalyzes the transfer of sulfate to position 4 of the N-acetylgalactosamine (GalNAc) residue of dermatan sulfate. Plays a pivotal role in the formation of 4-0-sulfated IdoA blocks in dermatan sulfate. Transfers sulfate to the C-4 hydroxyl of beta1,4-linked GalNAc that is substituted with an alpha-linked iduronic acid (IdoUA) at the C-3 hydroxyl. Transfers sulfate more efficiently to GalNAc residues in -IdoUA-GalNAc-IdoUA- than in -GlcUA-GalNAc-GlcUA-sequences. Has preference for partially desulfated dermatan sulfate. Addition of sulfate to GalNAc may occur immediately after epimerization of GlcUA to IdoUA. Appears to have an important role in the formation of the cerebellar neural network during postnatal brain development. The protein is Carbohydrate sulfotransferase 14 (Chst14) of Mus musculus (Mouse).